The following is a 257-amino-acid chain: Acyl-[acyl-carrier-protein]--UDP-N-acetylglucosamine O-acyltransferase (257 aa).

It belongs to the transferase hexapeptide repeat family. LpxA subfamily. Homotrimer.

It localises to the cytoplasm. The catalysed reaction is a (3R)-hydroxyacyl-[ACP] + UDP-N-acetyl-alpha-D-glucosamine = a UDP-3-O-[(3R)-3-hydroxyacyl]-N-acetyl-alpha-D-glucosamine + holo-[ACP]. It participates in glycolipid biosynthesis; lipid IV(A) biosynthesis; lipid IV(A) from (3R)-3-hydroxytetradecanoyl-[acyl-carrier-protein] and UDP-N-acetyl-alpha-D-glucosamine: step 1/6. Involved in the biosynthesis of lipid A, a phosphorylated glycolipid that anchors the lipopolysaccharide to the outer membrane of the cell. The sequence is that of Acyl-[acyl-carrier-protein]--UDP-N-acetylglucosamine O-acyltransferase from Anaeromyxobacter sp. (strain Fw109-5).